A 147-amino-acid chain; its full sequence is Hemoglobin subunit beta (147 aa).

Residues 2–147 (ELTEAQRGAI…VVSALGKQYH (146 aa)) enclose the Globin domain. Residues His-63 and His-92 each coordinate heme b.

This sequence belongs to the globin family. In terms of assembly, heterotetramer of two alpha chains and two beta chains. As to expression, red blood cells.

Involved in oxygen transport from gills to the various peripheral tissues. This is Hemoglobin subunit beta (hbb) from Electrophorus electricus (Electric eel).